Consider the following 293-residue polypeptide: 33 kDa chaperonin (293 aa).

Disulfide bonds link Cys238/Cys240 and Cys271/Cys274.

This sequence belongs to the HSP33 family. Under oxidizing conditions two disulfide bonds are formed involving the reactive cysteines. Under reducing conditions zinc is bound to the reactive cysteines and the protein is inactive.

The protein resides in the cytoplasm. In terms of biological role, redox regulated molecular chaperone. Protects both thermally unfolding and oxidatively damaged proteins from irreversible aggregation. Plays an important role in the bacterial defense system toward oxidative stress. This Staphylococcus epidermidis (strain ATCC 35984 / DSM 28319 / BCRC 17069 / CCUG 31568 / BM 3577 / RP62A) protein is 33 kDa chaperonin.